We begin with the raw amino-acid sequence, 878 residues long: AP-2 complex subunit alpha (878 aa).

This sequence belongs to the adaptor complexes large subunit family. In terms of assembly, adaptor protein complex 2 (AP-2) is a heterotetramer composed of two large adaptins (alpha-type subunit apl3 and beta-type subunit apl1), a medium chain (mu-type subunit apm4) and a small adaptin (sigma-type subunit aps2).

It localises to the cell membrane. It is found in the membrane. Its subcellular location is the coated pit. Functionally, adaptins are components of the adaptor complexes which link clathrin to receptors in coated vesicles. Clathrin-associated protein complexes are believed to interact with the cytoplasmic tails of membrane proteins, leading to their selection and concentration. Alpha adaptin is a subunit of the plasma membrane adaptor. This chain is AP-2 complex subunit alpha (apl3), found in Schizosaccharomyces pombe (strain 972 / ATCC 24843) (Fission yeast).